The following is a 292-amino-acid chain: Coiled-coil domain-containing protein 192 (292 aa).

Residues 28–55 form a disordered region; that stretch reads SVVPESDTSERSSMTSGSSESDIPQENK. Residues 38–49 show a composition bias toward low complexity; that stretch reads RSSMTSGSSESD. Coiled-coil stretches lie at residues 65–174 and 222–258; these read QMAF…LATA and IMEL…AERS. Residues 251 to 267 show a composition bias toward basic and acidic residues; the sequence is QQLEAERSPHPPQEVKD. The interval 251 to 292 is disordered; sequence QQLEAERSPHPPQEVKDPPGCLPEAPVFSTHDIPPVVSDENL.

This Homo sapiens (Human) protein is Coiled-coil domain-containing protein 192.